The chain runs to 190 residues: uncharacterized protein (190 aa).

The protein to E.coli YdjR.

This is an uncharacterized protein from Pseudomonas putida (Arthrobacter siderocapsulatus).